The primary structure comprises 201 residues: Small ribosomal subunit protein uS4c (201 aa).

The S4 RNA-binding domain maps to 89–150 (MRLDNIVFRL…RQKSQAIITK (62 aa)).

The protein belongs to the universal ribosomal protein uS4 family. As to quaternary structure, part of the 30S ribosomal subunit. Contacts protein S5. The interaction surface between S4 and S5 is involved in control of translational fidelity.

It localises to the plastid. Its subcellular location is the chloroplast. One of the primary rRNA binding proteins, it binds directly to 16S rRNA where it nucleates assembly of the body of the 30S subunit. In terms of biological role, with S5 and S12 plays an important role in translational accuracy. The chain is Small ribosomal subunit protein uS4c (rps4) from Physcomitrium patens (Spreading-leaved earth moss).